The primary structure comprises 440 residues: Heat stress transcription factor A-4b (440 aa).

Positions 121–181 (NERKDYEEEI…QRSLISYVRE (61 aa)) form a coiled coil. A hydrophobic repeat HR-A/B region spans residues 133 to 183 (LKSDNAALSSELQNNTLKKLNMEKRMQALEEKLFVVEDQQRSLISYVREIV). The Nuclear export signal signature appears at 158 to 163 (MQALEE). Residues 200–204 (RKKRR) carry the Nuclear localization signal motif. Positions 264 to 417 (DISYDDGVPG…EMKSGDRQHL (154 aa)) are disordered. Positions 295-305 (SPPTRMRTSSA) are enriched in polar residues. Over residues 333–343 (SRVDTRAKVSE) the composition is skewed to basic and acidic residues. The AHA signature appears at 375–384 (DGFWQQFLTE). Residues 380–390 (QFLTEQPGSSD) show a composition bias toward polar residues. Residues 391 to 417 (AHQEAQSERRDGGNKVDEMKSGDRQHL) show a composition bias toward basic and acidic residues.

This sequence belongs to the HSF family. Class A subfamily. Homotrimer. In terms of processing, exhibits temperature-dependent phosphorylation.

The protein resides in the cytoplasm. The protein localises to the nucleus. Transcriptional regulator that specifically binds DNA of heat shock promoter elements (HSE). The sequence is that of Heat stress transcription factor A-4b (HSFA4B) from Oryza sativa subsp. japonica (Rice).